The following is an 812-amino-acid chain: Lon protease (812 aa).

One can recognise a Lon N-terminal domain in the interval 12 to 205; sequence LPMLPLRGVL…YLCELLAKEM (194 aa). ATP is bound at residue 357–364; it reads GPPGVGKT. A Lon proteolytic domain is found at 593 to 774; it reads ENQVGVATGL…DEVLEETLLK (182 aa). Catalysis depends on residues S680 and K723.

Belongs to the peptidase S16 family. In terms of assembly, homohexamer. Organized in a ring with a central cavity.

It localises to the cytoplasm. The enzyme catalyses Hydrolysis of proteins in presence of ATP.. Functionally, ATP-dependent serine protease that mediates the selective degradation of mutant and abnormal proteins as well as certain short-lived regulatory proteins. Required for cellular homeostasis and for survival from DNA damage and developmental changes induced by stress. Degrades polypeptides processively to yield small peptide fragments that are 5 to 10 amino acids long. Binds to DNA in a double-stranded, site-specific manner. The protein is Lon protease of Syntrophomonas wolfei subsp. wolfei (strain DSM 2245B / Goettingen).